Consider the following 33-residue polypeptide: MSDINATRLPIFWFIYFPCVGDNVDNTLTRGER.

A propeptide spanning residues 1–10 (MSDINATRLP) is cleaved from the precursor. Positions 11–18 (IFWFIYFP) form a cross-link, cyclopeptide (Ile-Pro). Residues 19 to 32 (CVGDNVDNTLTRGE) constitute a propeptide that is removed on maturation.

The protein belongs to the MSDIN fungal toxin family. Post-translationally, processed by the macrocyclase-peptidase enzyme POPB to yield a toxic cyclic octapeptide. POPB first removes 10 residues from the N-terminus. Conformational trapping of the remaining peptide forces the enzyme to release this intermediate rather than proceed to macrocyclization. The enzyme rebinds the remaining peptide in a different conformation and catalyzes macrocyclization of the N-terminal 8 residues.

In terms of biological role, probable toxin that belongs to the MSDIN-like toxin family responsible for a large number of food poisoning cases and deaths. This chain is MSDIN-like toxin proprotein 5, found in Amanita phalloides (Death cap).